A 2531-amino-acid polypeptide reads, in one-letter code: Highly reducing polyketide synthase ausV (2531 aa).

The region spanning serine 7–threonine 432 is the Ketosynthase family 3 (KS3) domain. Residues cysteine 180, histidine 315, and histidine 355 each act as for beta-ketoacyl synthase activity in the active site. A malonyl-CoA:ACP transacylase (MAT) domain region spans residues phenylalanine 554–serine 882. Serine 644 acts as the For malonyltransferase activity in catalysis. Positions histidine 939–aspartate 1069 are N-terminal hotdog fold. In terms of domain architecture, PKS/mFAS DH spans histidine 939–aspartate 1238. The dehydratase (DH) domain stretch occupies residues aspartate 940–serine 1236. Histidine 971 acts as the Proton acceptor; for dehydratase activity in catalysis. The tract at residues tyrosine 1087 to aspartate 1238 is C-terminal hotdog fold. Aspartate 1152 (proton donor; for dehydratase activity) is an active-site residue. The interval serine 1414 to serine 1592 is methyltransferase (CMet) domain. The segment at leucine 1832–arginine 2133 is enoyl reductase (ER) domain. The tract at residues histidine 2156 to isoleucine 2331 is ketoreductase (KR) domain. Residues alanine 2444 to serine 2521 enclose the Carrier domain. An O-(pantetheine 4'-phosphoryl)serine modification is found at serine 2481.

The protein operates within secondary metabolite biosynthesis; terpenoid biosynthesis. Highly reducing polyketide synthase; part of the gene cluster that mediates the biosynthesis of calidodehydroaustin, a fungal meroterpenoid. The first step of the pathway is the synthesis of 3,5-dimethylorsellinic acid by the polyketide synthase ausA. 3,5-dimethylorsellinic acid is then prenylated by the polyprenyl transferase ausN. Further epoxidation by the FAD-dependent monooxygenase ausM and cyclization by the probable terpene cyclase ausL lead to the formation of protoaustinoid A. Protoaustinoid A is then oxidized to spiro-lactone preaustinoid A3 by the combined action of the FAD-binding monooxygenases ausB and ausC, and the dioxygenase ausE. Acid-catalyzed keto-rearrangement and ring contraction of the tetraketide portion of preaustinoid A3 by ausJ lead to the formation of preaustinoid A4. The aldo-keto reductase ausK, with the help of ausH, is involved in the next step by transforming preaustinoid A4 into isoaustinone which is in turn hydroxylated by the P450 monooxygenase ausI to form austinolide. The cytochrome P450 monooxygenase ausG modifies austinolide to austinol. Austinol is further acetylated to austin by the O-acetyltransferase ausP, which spontaneously changes to dehydroaustin. The cytochrome P450 monooxygenase ausR then converts dehydroaustin is into 7-dehydrodehydroaustin. The hydroxylation catalyzed by ausR permits the O-acetyltransferase ausQ to add an additional acetyl group to the molecule, leading to the formation of acetoxydehydroaustin. The short chain dehydrogenase ausT catalyzes the reduction of the double bond present between carbon atoms 1 and 2 to convert 7-dehydrodehydroaustin into 1,2-dihydro-7-hydroxydehydroaustin. AusQ catalyzes not only an acetylation reaction but also the addition of the PKS ausV diketide product to 1,2-dihydro-7-hydroxydehydroaustin, forming precalidodehydroaustin. Finally, the iron/alpha-ketoglutarate-dependent dioxygenase converts precalidodehydroaustin into calidodehydroaustin. This is Highly reducing polyketide synthase ausV from Aspergillus calidoustus.